The following is a 946-amino-acid chain: Translation initiation factor IF-2 (946 aa).

Disordered regions lie at residues 58–250 and 301–324; these read AERK…AVVI and VSRD…KSLS. Composition is skewed to low complexity over residues 102-165 and 174-185; these read EPPQ…QPAA and AQPSAPQPAAAQ. Residues 186-211 show a composition bias toward pro residues; the sequence is PRPPQPPMPSRPPPAGYRPAPPPGAR. Low complexity predominate over residues 212–229; it reads PPMSAAPGAPAQPGAAAQ. A tr-type G domain is found at 445-614; sequence IRPPVVTVMG…ALQSEVLELK (170 aa). A G1 region spans residues 454 to 461; it reads GHVDHGKT. Residue 454–461 participates in GTP binding; the sequence is GHVDHGKT. Positions 479 to 483 are G2; it reads GITQH. Residues 500–503 are G3; that stretch reads DTPG. GTP is bound by residues 500 to 504 and 554 to 557; these read DTPGH and NKVD. The segment at 554–557 is G4; the sequence is NKVD. Positions 590 to 592 are G5; that stretch reads SAR.

It belongs to the TRAFAC class translation factor GTPase superfamily. Classic translation factor GTPase family. IF-2 subfamily.

It localises to the cytoplasm. In terms of biological role, one of the essential components for the initiation of protein synthesis. Protects formylmethionyl-tRNA from spontaneous hydrolysis and promotes its binding to the 30S ribosomal subunits. Also involved in the hydrolysis of GTP during the formation of the 70S ribosomal complex. This is Translation initiation factor IF-2 from Anaeromyxobacter sp. (strain K).